Consider the following 206-residue polypeptide: Large ribosomal subunit protein uL4 (206 aa).

The segment at 60-84 is disordered; it reads TAKPFKQKGTGHARQGSKRSPQFRG. Over residues 64–76 the composition is skewed to basic residues; that stretch reads FKQKGTGHARQGS.

Belongs to the universal ribosomal protein uL4 family. As to quaternary structure, part of the 50S ribosomal subunit.

Functionally, one of the primary rRNA binding proteins, this protein initially binds near the 5'-end of the 23S rRNA. It is important during the early stages of 50S assembly. It makes multiple contacts with different domains of the 23S rRNA in the assembled 50S subunit and ribosome. Forms part of the polypeptide exit tunnel. This chain is Large ribosomal subunit protein uL4, found in Rhodospirillum rubrum (strain ATCC 11170 / ATH 1.1.1 / DSM 467 / LMG 4362 / NCIMB 8255 / S1).